The chain runs to 816 residues: Protein EFR3 homolog B (816 aa).

Residues serine 206–glutamine 219 are compositionally biased toward polar residues. The segment at serine 206–glutamate 230 is disordered. Positions serine 221 to glutamate 230 are enriched in basic and acidic residues.

It belongs to the EFR3 family. Component of a phosphatidylinositol 4-kinase (PI4K) complex. Palmitoylated at its N-terminus, anchoring the protein to the plasma membrane.

It is found in the cell membrane. In terms of biological role, component of a complex required to localize phosphatidylinositol 4-kinase (PI4K) to the plasma membrane. The complex acts as a regulator of phosphatidylinositol 4-phosphate (PtdIns(4)P) synthesis. In the complex, efr3b probably acts as the membrane-anchoring component. This chain is Protein EFR3 homolog B (efr3b), found in Danio rerio (Zebrafish).